The following is a 288-amino-acid chain: Phospholipid phosphatase 2 (288 aa).

Residues 1 to 4 (MQRR) lie on the Cytoplasmic side of the membrane. The chain crosses the membrane as a helical span at residues 5-25 (WVFVLLDVLCLLVASLPFAIL). The Lumenal segment spans residues 26–51 (TLVNAPYKRGFYCGDDSIRYPYRPDT). The chain crosses the membrane as a helical span at residues 52 to 72 (ITHGLMAGVTITATVILVSAG). Topologically, residues 73-87 (EAYLVYTDRLYSRSD) are cytoplasmic. Residues 88 to 108 (FNNYVAAVYKVLGTFLFGAAV) form a helical membrane-spanning segment. Over 109 to 162 (SQSLTDLAKYMIGRLRPNFLAVCDPDWSRVNCSVYVQLEKVCRGNPADVTEARL) the chain is Lumenal. Residues 117–125 (KYMIGRLRP) are phosphatase sequence motif I. Asn139 carries an N-linked (GlcNAc...) asparagine glycan. The chain crosses the membrane as a helical span at residues 163–183 (SFYSGHSSFGMYCMVFLALYV). Residues 165–168 (YSGH) are phosphatase sequence motif II. The Proton donors role is filled by His168. Over 184-196 (QARLCWKWARLLR) the chain is Cytoplasmic. The chain crosses the membrane as a helical span at residues 197–217 (PTVQFFLVAFALYVGYTRVSD). The phosphatase sequence motif III stretch occupies residues 213-224 (TRVSDYKHHWSD). At 218–226 (YKHHWSDVL) the chain is on the lumenal side. His220 functions as the Nucleophile in the catalytic mechanism. The chain crosses the membrane as a helical span at residues 227 to 247 (VGLLQGALVAALTVCYISDFF). At 248-288 (KARPPQHCLKEEELERKPSLSLTLTLGEADHNHYGYPHSSS) the chain is on the cytoplasmic side.

The protein belongs to the PA-phosphatase related phosphoesterase family. As to quaternary structure, forms functional homodimers and homooligomers. Can also form heterooligomers with PLPP1 and PLPP3. N-glycosylated. Found mainly in brain, pancreas and placenta.

It is found in the membrane. The protein localises to the cell membrane. Its subcellular location is the early endosome membrane. It localises to the endoplasmic reticulum membrane. The catalysed reaction is a 1,2-diacyl-sn-glycero-3-phosphate + H2O = a 1,2-diacyl-sn-glycerol + phosphate. It carries out the reaction 1,2-dihexadecanoyl-sn-glycero-3-phosphate + H2O = 1,2-dihexadecanoyl-sn-glycerol + phosphate. It catalyses the reaction 1,2-di-(9Z-octadecenoyl)-sn-glycero-3-phosphate + H2O = 1,2-di-(9Z-octadecenoyl)-sn-glycerol + phosphate. The enzyme catalyses a monoacyl-sn-glycero-3-phosphate + H2O = a monoacylglycerol + phosphate. The catalysed reaction is (9Z)-octadecenoyl-sn-glycero-3-phosphate + H2O = (9Z-octadecenoyl)-glycerol + phosphate. It carries out the reaction sphing-4-enine 1-phosphate + H2O = sphing-4-enine + phosphate. It catalyses the reaction an N-acylsphing-4-enine 1-phosphate + H2O = an N-acylsphing-4-enine + phosphate. The enzyme catalyses N-(octanoyl)-sphing-4-enine-1-phosphate + H2O = N-octanoylsphing-4-enine + phosphate. The catalysed reaction is N-(9Z-octadecenoyl)-ethanolamine phosphate + H2O = N-(9Z-octadecenoyl) ethanolamine + phosphate. Its pathway is lipid metabolism; phospholipid metabolism. Magnesium-independent phospholipid phosphatase. Insensitive to N-ethylmaleimide. Inhibited by sphingosine, zinc ions and modestly by propanolol. In terms of biological role, magnesium-independent phospholipid phosphatase that catalyzes the dephosphorylation of a variety of glycerolipid and sphingolipid phosphate esters including phosphatidate/PA, lysophosphatidate/LPA, sphingosine 1-phosphate/S1P and ceramide 1-phosphate/C1P. Has no apparent extracellular phosphatase activity and therefore most probably acts intracellularly. Also acts on N-oleoyl ethanolamine phosphate/N-(9Z-octadecenoyl)-ethanolamine phosphate, a potential physiological compound. Through dephosphorylation of these bioactive lipid mediators produces new bioactive compounds and may regulate signal transduction in different cellular processes. Indirectly regulates, for instance, cell cycle G1/S phase transition through its phospholipid phosphatase activity. The polypeptide is Phospholipid phosphatase 2 (Homo sapiens (Human)).